Reading from the N-terminus, the 324-residue chain is Aldo-keto reductase family 1 member C15 (324 aa).

Residues Thr-24 to Ala-26 and Asp-51 each bind NADP(+). Tyr-56 acts as the Proton donor in catalysis. His-118 contacts substrate. Residues Ser-167–Asn-168, Gln-191, Tyr-217–Asp-225, and Leu-269–Asn-281 contribute to the NADP(+) site.

This sequence belongs to the aldo/keto reductase family. As to quaternary structure, monomer. As to expression, expressed in lung, specifically in bronchiolar club cells, type II alveolar cells and epithelial cells of the duct of the bronchial gland (at protein level). Expressed in gastric parietal cells and in epithelial cells of the large intestine and colon (at protein level). Expressed in brown adipocytes (at protein level). Expressed in vascular endothelial cells (at protein level).

The protein resides in the cytoplasm. The enzyme catalyses (2E,6E)-farnesol + NADP(+) = (2E,6E)-farnesal + NADPH + H(+). With respect to regulation, the dehydrogenase activity is inhibited by 3',3'',5',5''-tetraiodophenolphthalein, phenolphthalein, genistein, quercetin, zearalenone and diethylstilbestrol. Its function is as follows. Catalyzes the NADPH-dependent reduction of a variety of substrates including aromatic and aliphatic aldehydes, quinones, ketones, dicarbonyl compounds and 17-ketosteroids. Catalyzes the NADP(+)-dependent oxidation of aromatic, alicyclic and aliphatic alcohols, and 17beta-hydroxysteroids. To a lesser extent, can also catalyze the reduction of some aldoses and ketoses and the oxidation of some sugar alcohols. In the stomach, lung and colon tissues, mediates the reduction of farnesal and geranylgeranial into farnesol and geranylgeraniol respectively. By reducing 4-hydroxy-2-nonenal (HNE), produced during lipid peroxidation, into 1,4-dihydro-2-nonene (DHN), protects vascular endothelial cells from damage elicited by oxidized lipoproteins. This is Aldo-keto reductase family 1 member C15 from Rattus norvegicus (Rat).